The sequence spans 221 residues: MRAIAVDIDGTITDKKRRLSLEAVKALRGAEEAGVPVIMVTGNILCFAMATSVLIGASGGVVAENGGVLHINDEVRVLGDISKAEMAYSHLKGIYPVRKVQFSDLRVSEIALTRDVPADTVREALRDFDVEVYDTGFAIHLTDPSVNKGSSLEILLESMGIEMEDVMAIGDSENDLEFIEAAGFRVAVANADPELREMADYVTSAAHGEGVAEAVRRFMGW.

Asp-7 serves as the catalytic Nucleophile. Residues Asp-7 and Asp-9 each contribute to the Mg(2+) site. Lys-148 serves as a coordination point for substrate. The Mg(2+) site is built by Asp-171 and Asp-175.

The protein belongs to the archaeal SPP-like hydrolase family. Mg(2+) is required as a cofactor.

The enzyme catalyses 2-phosphoglycolate + H2O = glycolate + phosphate. Its function is as follows. Catalyzes the dephosphorylation of 2-phosphoglycolate. The polypeptide is Phosphoglycolate phosphatase (Methanothermobacter thermautotrophicus (strain ATCC 29096 / DSM 1053 / JCM 10044 / NBRC 100330 / Delta H) (Methanobacterium thermoautotrophicum)).